Here is a 266-residue protein sequence, read N- to C-terminus: Phosphate import ATP-binding protein PstB 1 (266 aa).

The region spanning 18 to 261 is the ABC transporter domain; the sequence is AQTSNLSFYY…PTNQLTEQYV (244 aa). Residue 50 to 57 participates in ATP binding; it reads GPSGCGKT.

The protein belongs to the ABC transporter superfamily. Phosphate importer (TC 3.A.1.7) family. The complex is composed of two ATP-binding proteins (PstB), two transmembrane proteins (PstC and PstA) and a solute-binding protein (PstS).

It is found in the cell inner membrane. The enzyme catalyses phosphate(out) + ATP + H2O = ADP + 2 phosphate(in) + H(+). Part of the ABC transporter complex PstSACB involved in phosphate import. Responsible for energy coupling to the transport system. The polypeptide is Phosphate import ATP-binding protein PstB 1 (Gloeobacter violaceus (strain ATCC 29082 / PCC 7421)).